Reading from the N-terminus, the 754-residue chain is 5-methyltetrahydropteroyltriglutamate--homocysteine methyltransferase (754 aa).

5-methyltetrahydropteroyltri-L-glutamate is bound by residues Arg17–Lys20 and Lys117. L-homocysteine is bound by residues Ile431 to Ser433 and Glu484. Residues Ile431–Ser433 and Glu484 contribute to the L-methionine site. 5-methyltetrahydropteroyltri-L-glutamate-binding positions include Arg515–Cys516 and Trp561. An L-homocysteine-binding site is contributed by Asp599. Asp599 is a binding site for L-methionine. Glu605 is a binding site for 5-methyltetrahydropteroyltri-L-glutamate. Zn(2+) is bound by residues His641, Cys643, and Glu665. Residue His694 is the Proton donor of the active site. Cys726 lines the Zn(2+) pocket.

The protein belongs to the vitamin-B12 independent methionine synthase family. It depends on Zn(2+) as a cofactor.

The catalysed reaction is 5-methyltetrahydropteroyltri-L-glutamate + L-homocysteine = tetrahydropteroyltri-L-glutamate + L-methionine. It participates in amino-acid biosynthesis; L-methionine biosynthesis via de novo pathway; L-methionine from L-homocysteine (MetE route): step 1/1. Catalyzes the transfer of a methyl group from 5-methyltetrahydrofolate to homocysteine resulting in methionine formation. This Salmonella enteritidis PT4 (strain P125109) protein is 5-methyltetrahydropteroyltriglutamate--homocysteine methyltransferase.